The primary structure comprises 149 residues: Putative pre-16S rRNA nuclease (149 aa).

It belongs to the YqgF nuclease family.

It is found in the cytoplasm. Could be a nuclease involved in processing of the 5'-end of pre-16S rRNA. The chain is Putative pre-16S rRNA nuclease from Cupriavidus metallidurans (strain ATCC 43123 / DSM 2839 / NBRC 102507 / CH34) (Ralstonia metallidurans).